The following is a 511-amino-acid chain: MKNSDIIVLDFGSQYTQLIARRLREQGVYTEILPFNAKISQIKEKNPKGLILSGGPASVYAKDAYFPNDEIFNLNLPILGICYGMQLIAYHFGASVTPTNKKEYGKSNLKFVSENALLKDTKDGQIVWMSHSDKVENLPDGFKTIAVSENSPFCAFCDEKRKIYALQFHPEVAHSECGDKILKNFAKYICDCESTWNMGNFAKIKCEEIKKQVGKDRVLCAVSGGVDSSVVAALLAHCIKENLIVVFVDNGLLRTDEAKQVEQTFKLKLGVELISIDASELFLGRLKGITDPEEKRKIIGKTFIEVFEREAKKHQNVKYLAQGTLYTDIIESSVVGSSKTIKSHHNVGGLPKDMKFKLIEPLKEIFKDEVRKLGTELGLSPDLVYRHPFPGPGLAIRILGEITPEKLCVLRKADVILRDELKSSGWYNKTWQAFCVLLNVNSVGVMGDNRTYENAVCIRVVDASDGMTASFSRLPYDLLENISRRIINEVDGINRVVYDISSKPPATIEWE.

The region spanning 5–195 is the Glutamine amidotransferase type-1 domain; the sequence is DIIVLDFGSQ…AKYICDCEST (191 aa). Catalysis depends on Cys82, which acts as the Nucleophile. Catalysis depends on residues His169 and Glu171. The region spanning 196–386 is the GMPS ATP-PPase domain; it reads WNMGNFAKIK…LGLSPDLVYR (191 aa). Residue 223–229 coordinates ATP; the sequence is SGGVDSS.

As to quaternary structure, homodimer.

The enzyme catalyses XMP + L-glutamine + ATP + H2O = GMP + L-glutamate + AMP + diphosphate + 2 H(+). It participates in purine metabolism; GMP biosynthesis; GMP from XMP (L-Gln route): step 1/1. Functionally, catalyzes the synthesis of GMP from XMP. This is GMP synthase [glutamine-hydrolyzing] from Campylobacter hominis (strain ATCC BAA-381 / DSM 21671 / CCUG 45161 / LMG 19568 / NCTC 13146 / CH001A).